We begin with the raw amino-acid sequence, 353 residues long: Mitochondrial import inner membrane translocase subunit TIM50 (353 aa).

The N-terminal 21 residues, 1–21 (MAASAALFSRLRSGLRVGARG), are a transit peptide targeting the mitochondrion. Topologically, residues 22-65 (LCTRLAPPPPRTPEQVTEIANRGGSKAQGPQHQPGSEGPSYAKK) are mitochondrial matrix. Residues 24–59 (TRLAPPPPRTPEQVTEIANRGGSKAQGPQHQPGSEG) form a disordered region. The helical transmembrane segment at 66–86 (IALWIAGLLGAGGTVSIVYIF) threads the bilayer. Over 87–353 (GNNPVDENGT…SRLWPRSKQP (267 aa)) the chain is Mitochondrial intermembrane. Residues 143–286 (YYQPPYTLVL…LDLSAFLKTI (144 aa)) enclose the FCP1 homology domain. Residue S341 is modified to Phosphoserine.

It belongs to the TIM50 family. Component of the TIM23 complex at least composed of TIMM23, TIMM17 (TIMM17A or TIMM17B) and TIMM50; within this complex, directly interacts with TIMM23. The complex interacts with the TIMM44 component of the PAM complex and with DNAJC15.

It is found in the mitochondrion inner membrane. Essential component of the TIM23 complex, a complex that mediates the translocation of transit peptide-containing proteins across the mitochondrial inner membrane. Has some phosphatase activity in vitro; however such activity may not be relevant in vivo. In Mus musculus (Mouse), this protein is Mitochondrial import inner membrane translocase subunit TIM50 (Timm50).